A 108-amino-acid chain; its full sequence is Large ribosomal subunit protein uL24 (108 aa).

Positions 46–65 are disordered; it reads RHTRVQQSSRGSQSGGIVTQ. A compositionally biased stretch (low complexity) spans 51-61; the sequence is QQSSRGSQSGG.

This sequence belongs to the universal ribosomal protein uL24 family. In terms of assembly, part of the 50S ribosomal subunit.

One of two assembly initiator proteins, it binds directly to the 5'-end of the 23S rRNA, where it nucleates assembly of the 50S subunit. In terms of biological role, one of the proteins that surrounds the polypeptide exit tunnel on the outside of the subunit. This Parafrankia sp. (strain EAN1pec) protein is Large ribosomal subunit protein uL24.